Reading from the N-terminus, the 264-residue chain is tRNA (guanine-N(1)-)-methyltransferase (264 aa).

S-adenosyl-L-methionine is bound by residues glycine 125 and 145–150 (LGDFVL).

Belongs to the RNA methyltransferase TrmD family. Homodimer.

The protein localises to the cytoplasm. It catalyses the reaction guanosine(37) in tRNA + S-adenosyl-L-methionine = N(1)-methylguanosine(37) in tRNA + S-adenosyl-L-homocysteine + H(+). Specifically methylates guanosine-37 in various tRNAs. This Burkholderia cenocepacia (strain HI2424) protein is tRNA (guanine-N(1)-)-methyltransferase.